The primary structure comprises 316 residues: uncharacterized protein (316 aa).

Substrate is bound at residue Thr126. Tyr149 functions as the Proton acceptor in the catalytic mechanism.

It belongs to the NAD(P)-dependent epimerase/dehydratase family.

This is an uncharacterized protein from Bacillus subtilis (strain 168).